A 305-amino-acid chain; its full sequence is Methionyl-tRNA formyltransferase (305 aa).

110–113 is a (6S)-5,6,7,8-tetrahydrofolate binding site; that stretch reads SLLP.

This sequence belongs to the Fmt family.

It carries out the reaction L-methionyl-tRNA(fMet) + (6R)-10-formyltetrahydrofolate = N-formyl-L-methionyl-tRNA(fMet) + (6S)-5,6,7,8-tetrahydrofolate + H(+). In terms of biological role, attaches a formyl group to the free amino group of methionyl-tRNA(fMet). The formyl group appears to play a dual role in the initiator identity of N-formylmethionyl-tRNA by promoting its recognition by IF2 and preventing the misappropriation of this tRNA by the elongation apparatus. The protein is Methionyl-tRNA formyltransferase of Ureaplasma urealyticum serovar 10 (strain ATCC 33699 / Western).